The following is a 413-amino-acid chain: MTAPTGTSATTTRPWTPRIATQLSVLACAAFIYVTAEILPVGALSAIARNLRVSVVLVGTLLSWYALVAAVTTVPLVRWTAHWPRRRALVVSLVCLTVSQLVSALAPNFAVLAAGRVLCAVTHGLLWAVIAPIATRLVPPSHAGRATTSIYIGTSLALVVGSPLTAAMSLMWGWRLAAVCVTGAAAAVALAARLALPEMVLRADQLEHVGRRARHHRNPRLVKVSVLTMIAVTGHFVSYTYIVVIIRDVVGVRGPNLAWLLAAYGVAGLVSVPLVARPLDRWPKGAVIVGMTGLTAAFTLLTALAFGERHTAATALLGTGAIVLWGALATAVSPMLQSAAMRSGGDDPDGASGLYVTAFQIGIMAGALLGGLLYERSLAMMLTASAGLMGVALFGMTVSQHLFENPTLSPGDG.

Transmembrane regions (helical) follow at residues 23 to 43 (LSVL…PVGA), 55 to 75 (VVLV…TTVP), 89 to 109 (LVVS…APNF), 110 to 130 (AVLA…WAVI), 150 to 170 (IYIG…AMSL), 176 to 196 (LAAV…RLAL), 226 to 246 (VLTM…VVII), 256 to 276 (NLAW…PLVA), 286 to 306 (AVIV…ALAF), 312 to 332 (AATA…ATAV), 353 to 373 (GLYV…GGLL), and 378 to 398 (LAMM…GMTV).

The protein belongs to the major facilitator superfamily.

It is found in the cell membrane. Inhibited by the drug efflux pump inhibitors verapamil, resperine, piperine, chlorpromazine and carbonyl cyanide m-chlorophenylhydrazone (CCCP). Its function is as follows. Active efflux pump that plays an important role in chloramphenicol resistance. Overexpression causes pyrazinamide resistance. In Mycobacterium tuberculosis (strain ATCC 25618 / H37Rv), this protein is Chloramphenicol efflux pump Rv0191.